Here is a 339-residue protein sequence, read N- to C-terminus: Fructose-1,6-bisphosphatase isozyme 2 (339 aa).

The tract at residues 3–10 (DRSPFETD) is important for interaction with ALDOA. AMP contacts are provided by residues Val18 and 28-32 (TGELT). 2 residues coordinate Mg(2+): Asp69 and Glu98. 113–114 (KY) is an AMP binding site. Mg(2+)-binding residues include Asp119, Leu121, and Asp122. Asp122 is a binding site for substrate. Arg141 lines the AMP pocket. The Nuclear localization signal motif lies at 204–208 (KKKGK). Position 213-216 (213-216 (NEGY)) interacts with substrate. A phosphotyrosine mark is found at Tyr216 and Tyr219. Substrate contacts are provided by residues 245–249 (YVGSM), Tyr265, and Lys275. Glu281 contributes to the Mg(2+) binding site.

The protein belongs to the FBPase class 1 family. In terms of assembly, homotetramer. Interacts with ALDOA; the interaction blocks inhibition by physiological concentrations of AMP and reduces inhibition by Ca(2+). Interacts with alpha-actinin and F-actin. The cofactor is Mg(2+).

It localises to the cell junction. The protein localises to the cytoplasm. It is found in the nucleus. Its subcellular location is the myofibril. The protein resides in the sarcomere. It localises to the z line. It carries out the reaction beta-D-fructose 1,6-bisphosphate + H2O = beta-D-fructose 6-phosphate + phosphate. It participates in carbohydrate biosynthesis; gluconeogenesis. Its activity is regulated as follows. Subject to complex allosteric regulation. The enzyme can assume an active R-state, or an inactive T-state. Intermediate conformations may exist. AMP acts as an allosteric inhibitor. Fructose 2,6-bisphosphate acts as a competitive inhibitor. Strongly inhibited by Ca(2+). Catalyzes the hydrolysis of fructose 1,6-bisphosphate to fructose 6-phosphate in the presence of divalent cations and probably participates in glycogen synthesis from carbohydrate precursors, such as lactate. In Bos taurus (Bovine), this protein is Fructose-1,6-bisphosphatase isozyme 2 (FBP2).